Consider the following 131-residue polypeptide: Small ribosomal subunit protein uS8 (131 aa).

This sequence belongs to the universal ribosomal protein uS8 family. In terms of assembly, part of the 30S ribosomal subunit. Contacts proteins S5 and S12.

Its function is as follows. One of the primary rRNA binding proteins, it binds directly to 16S rRNA central domain where it helps coordinate assembly of the platform of the 30S subunit. In Ruthia magnifica subsp. Calyptogena magnifica, this protein is Small ribosomal subunit protein uS8.